The chain runs to 312 residues: Olfactory receptor 6N1 (312 aa).

The Extracellular portion of the chain corresponds to 1-25; sequence MDTGNWSQVAEFIILGFPHLQGVQI. Asn5 is a glycosylation site (N-linked (GlcNAc...) asparagine). A helical transmembrane segment spans residues 26-46; sequence YLFLLLLLIYLMTVLGNLLIF. Residues 47–54 are Cytoplasmic-facing; it reads LVVCLDSR. The chain crosses the membrane as a helical span at residues 55–75; sequence LHTPMYHFVSILSFSELGYTA. Over 76-99 the chain is Extracellular; it reads ATIPKMLANLLSEKKTISFSGCLL. Cys97 and Cys189 form a disulfide bridge. A helical transmembrane segment spans residues 100-120; that stretch reads QIYFFHSLGATECYLLTAMAY. Over 121 to 139 the chain is Cytoplasmic; it reads DRYLAICRPLHYPTLMTPT. A helical membrane pass occupies residues 140–160; that stretch reads LCAEIAIGCWLGGLAGPVVEI. At 161 to 197 the chain is on the extracellular side; that stretch reads SLISRLPFCGPNRIQHVFCDFPPVLSLACTDTSINVL. A helical transmembrane segment spans residues 198 to 217; it reads VDFVINSCKILATFLLILCS. At 218 to 237 the chain is on the cytoplasmic side; that stretch reads YVQIICTVLRIPSAAGKRKA. Residues 238-258 traverse the membrane as a helical segment; the sequence is ISTCASHFTVVLIFYGSILSM. Residues 259–271 lie on the Extracellular side of the membrane; it reads YVQLKKSYSLDYD. The chain crosses the membrane as a helical span at residues 272–292; it reads QALAVVYSVLTPFLNPFIYSL. Residues 293–312 lie on the Cytoplasmic side of the membrane; it reads RNKEIKEAVRRQLKRIGILA.

It belongs to the G-protein coupled receptor 1 family.

The protein localises to the cell membrane. Functionally, odorant receptor. The chain is Olfactory receptor 6N1 (OR6N1) from Homo sapiens (Human).